The primary structure comprises 100 residues: Large ribosomal subunit protein uL23 (100 aa).

This sequence belongs to the universal ribosomal protein uL23 family. In terms of assembly, part of the 50S ribosomal subunit. Contacts protein L29, and trigger factor when it is bound to the ribosome.

Functionally, one of the early assembly proteins it binds 23S rRNA. One of the proteins that surrounds the polypeptide exit tunnel on the outside of the ribosome. Forms the main docking site for trigger factor binding to the ribosome. This chain is Large ribosomal subunit protein uL23, found in Salmonella paratyphi A (strain ATCC 9150 / SARB42).